The primary structure comprises 465 residues: UDP-glycosyltransferase 89A2 (465 aa).

UDP-alpha-D-glucose-binding positions include S291, 342–344 (VSQ), 359–367 (HCGWNSVLE), and 381–384 (EADQ).

It belongs to the UDP-glycosyltransferase family.

Glucosyltransferase that glucosylates benzoates and benzoate derivatives in vitro. This is UDP-glycosyltransferase 89A2 (UGT89A2) from Arabidopsis thaliana (Mouse-ear cress).